The primary structure comprises 299 residues: Putative fructokinase (299 aa).

Thr-130 lines the ATP pocket. His-153, Cys-168, His-171, and Cys-174 together coordinate Zn(2+). ATP contacts are provided by residues Pro-182 and Gly-230 to Gln-234.

This sequence belongs to the ROK (NagC/XylR) family. Mg(2+) is required as a cofactor.

It carries out the reaction D-fructose + ATP = D-fructose 6-phosphate + ADP + H(+). With respect to regulation, inhibited by zinc ions. Seems to be involved in the degradation of glucomannan. The chain is Putative fructokinase (gmuE) from Bacillus subtilis (strain 168).